Here is a 945-residue protein sequence, read N- to C-terminus: MNFAEEEPSKKYCIKGKHVAIICGVVVAVGLIVGLSVGLTRSCEQDTTPAPSQPPPEASTALPPQDQNVCPDSEDESGEWKNFRLPDFINPVHYDLEVKALMEEDRYTGIVTISVNLSKPTRDLWLHIRETKITKLPELRRPSGEQVPIRRCFEYKKQEYVVIQAAEDLAATSGDSVYRLTMEFKGWLNGSLVGFYKTTYMEDGQIRSIAATDHEPTDARKSFPCFDEPNKKSTYSISIIHPKEYSALSNMPEEKSEMVDDNWKKTTFVKSVPMSTYLVCFAVHRFTAIERKSRSGKPLKVYVQPNQKETAEYAANITQAVFDYFEDYFAMEYALPKLDKIAIPDFGTGAMENWGLVTYRETNLLYDPLLSASSNQQRVASVVAHELVHQWFGNTVTMDWWDDLWLNEGFASFFEFLGVNHAEKDWQMLSQVLLEDVFPVQEDDSLMSSHPVVVTVSTPAEITSVFDGISYSKGASILRMLQDWITPEKFQKGCQIYLKKFQFANAKTSDFWDSLQEASNLPVKEVMDTWTSQMGYPVVTVSGRQNITQKRFLLDSKADPSQPPSELGYTWNIPVRWADNDNSRITVYNRLDKGGITLNANLSGDAFLKINPDHIGFYRVNYEGGTWDWIAEALSSNHTRFSAADRSSFIDDAFALARAQLLNYKIALNLTMYLKSEEDFLPWERVISSVSYIISMFEDDRELYPMIETYFQGQVKPVADLLGWQDTGSHITKLLRASILGFACKMGDREALGNASQLFDSWLKGSASIPVNLRLLVYRYGMQNSGNEAAWNYTLEQYQKTSLAQEKEKLLYGLASVKDVKLLARYLEMLKDPNIIKTQDVFTVIRYISYNSYGKTMAWNWIQLNWDYLVSRFTINDRYLGRIVTIAEPFNTELQLWQMQSFFAKYPNAGAGAKPREQVLETVKNNIEWLNVNRQSIREWFASLP.

At 1 to 18 the chain is on the cytoplasmic side; sequence MNFAEEEPSKKYCIKGKH. The helical; Signal-anchor for type II membrane protein transmembrane segment at 19-39 threads the bilayer; it reads VAIICGVVVAVGLIVGLSVGL. Over 40–945 the chain is Extracellular; that stretch reads TRSCEQDTTP…SIREWFASLP (906 aa). Residues 43 to 77 form a disordered region; that stretch reads CEQDTTPAPSQPPPEASTALPPQDQNVCPDSEDES. N-linked (GlcNAc...) asparagine glycosylation is found at Asn116 and Asn189. Residue Glu215 coordinates substrate. An N-linked (GlcNAc...) asparagine glycan is attached at Asn316. 349 to 353 serves as a coordination point for substrate; the sequence is GAMEN. His385 contributes to the Zn(2+) binding site. The active-site Proton acceptor is the Glu386. Positions 389 and 408 each coordinate Zn(2+). N-linked (GlcNAc...) asparagine glycans are attached at residues Asn546, Asn601, Asn637, Asn669, Asn754, and Asn792. Residue Arg878 participates in substrate binding.

This sequence belongs to the peptidase M1 family. Homodimer; disulfide-linked. The cofactor is Zn(2+). Early B-lineage cells and certain stromal cell of hemopoietic tissues. Also expressed by capillary endothelial cells, placenta, and epithelial cells of the intestine and proximal renal tubules.

It is found in the cell membrane. It carries out the reaction Release of N-terminal glutamate (and to a lesser extent aspartate) from a peptide.. Its activity is regulated as follows. Substrate specificity is modulated by calcium which enhances the enzymatic activity for cleavage of acidic residues while reducing its activity with basic residues. Inhibited by aminopeptidase inhibitors amastatin and bestatin. Functionally, regulates central hypertension through its calcium-modulated preference to cleave N-terminal acidic residues from peptides such as angiotensin II. This is Glutamyl aminopeptidase (Enpep) from Mus musculus (Mouse).